Here is a 104-residue protein sequence, read N- to C-terminus: Large ribosomal subunit protein uL24 (104 aa).

It belongs to the universal ribosomal protein uL24 family. Part of the 50S ribosomal subunit.

In terms of biological role, one of two assembly initiator proteins, it binds directly to the 5'-end of the 23S rRNA, where it nucleates assembly of the 50S subunit. Functionally, one of the proteins that surrounds the polypeptide exit tunnel on the outside of the subunit. The polypeptide is Large ribosomal subunit protein uL24 (Pseudomonas aeruginosa (strain LESB58)).